Reading from the N-terminus, the 127-residue chain is Fumarate reductase subunit C (127 aa).

Transmembrane regions (helical) follow at residues 30–50 (ATILPLIFFTICLLVGLGSLV), 67–87 (IVVALNIVALAGSLFHAQTFF), and 107–127 (VVVLAQWAAVAAITLLVLVIV).

The protein belongs to the FrdC family. In terms of assembly, part of an enzyme complex containing four subunits: a flavoprotein (FrdA), an iron-sulfur protein (FrdB), and two hydrophobic anchor proteins (FrdC and FrdD).

Its subcellular location is the cell inner membrane. Anchors the catalytic components of the fumarate reductase complex to the cell membrane, binds quinones. The protein is Fumarate reductase subunit C of Aliivibrio salmonicida (strain LFI1238) (Vibrio salmonicida (strain LFI1238)).